Consider the following 323-residue polypeptide: Aspartate carbamoyltransferase catalytic subunit (323 aa).

Residues arginine 71 and threonine 72 each coordinate carbamoyl phosphate. Lysine 99 contacts L-aspartate. Residues arginine 121, histidine 151, and glutamine 154 each contribute to the carbamoyl phosphate site. Residues arginine 184 and arginine 239 each coordinate L-aspartate. Residues glycine 280 and proline 281 each coordinate carbamoyl phosphate.

The protein belongs to the aspartate/ornithine carbamoyltransferase superfamily. ATCase family. Heterododecamer (2C3:3R2) of six catalytic PyrB chains organized as two trimers (C3), and six regulatory PyrI chains organized as three dimers (R2).

It catalyses the reaction carbamoyl phosphate + L-aspartate = N-carbamoyl-L-aspartate + phosphate + H(+). It functions in the pathway pyrimidine metabolism; UMP biosynthesis via de novo pathway; (S)-dihydroorotate from bicarbonate: step 2/3. In terms of biological role, catalyzes the condensation of carbamoyl phosphate and aspartate to form carbamoyl aspartate and inorganic phosphate, the committed step in the de novo pyrimidine nucleotide biosynthesis pathway. The protein is Aspartate carbamoyltransferase catalytic subunit of Ralstonia pickettii (strain 12J).